We begin with the raw amino-acid sequence, 457 residues long: Fibrinogen C domain-containing protein 1-A (457 aa).

Residues 1–20 (MGSDRWKNIGGTPQMEDSAQ) form a disordered region. Residues 1 to 33 (MGSDRWKNIGGTPQMEDSAQEKTQRKGCGYILC) lie on the Cytoplasmic side of the membrane. A helical; Signal-anchor for type II membrane protein membrane pass occupies residues 34–54 (TVLLSVAVLLAVTVTGAVLFM). The Extracellular portion of the chain corresponds to 55–457 (NHYHAPSTEP…MKIRPQREEN (403 aa)). The segment at 216–235 (ADLQRAPSRNSRPRGCANGS) is disordered. The Fibrinogen C-terminal domain occupies 231–454 (CANGSKPRDC…FTEMKIRPQR (224 aa)). Asparagine 233 is a glycosylation site (N-linked (GlcNAc...) asparagine). Cysteine 240 and cysteine 269 are joined by a disulfide. An N-linked (GlcNAc...) asparagine glycan is attached at asparagine 336. Ca(2+) contacts are provided by aspartate 389 and aspartate 391. A disulfide bridge links cysteine 397 with cysteine 410.

As to quaternary structure, homotetramer; disulfide-linked.

The protein localises to the membrane. Its function is as follows. Acetyl group-binding receptor which shows a calcium-dependent binding to acetylated structures such as chitin, some N-acetylated carbohydrates, and amino acids. The chain is Fibrinogen C domain-containing protein 1-A (fibcd1-a) from Xenopus laevis (African clawed frog).